The chain runs to 142 residues: Large ribosomal subunit protein uL11 (142 aa).

This sequence belongs to the universal ribosomal protein uL11 family. As to quaternary structure, part of the ribosomal stalk of the 50S ribosomal subunit. Interacts with L10 and the large rRNA to form the base of the stalk. L10 forms an elongated spine to which L12 dimers bind in a sequential fashion forming a multimeric L10(L12)X complex. In terms of processing, one or more lysine residues are methylated.

Its function is as follows. Forms part of the ribosomal stalk which helps the ribosome interact with GTP-bound translation factors. This is Large ribosomal subunit protein uL11 from Klebsiella pneumoniae (strain 342).